The primary structure comprises 211 residues: Inactive ribonuclease-like protein 10 (211 aa).

Positions 1–24 are cleaved as a signal peptide; it reads MKLTLVQIFFMMLLLLLGLGVGLG.

It belongs to the pancreatic ribonuclease family. In terms of processing, the N-terminus is blocked. Glycosylated.

The protein localises to the secreted. In terms of biological role, secreted proximal epididymal protein required for post-testicular sperm maturation and male fertility. May be involved in sperm adhesion to the egg zona pellucida. Does not have ribonuclease activity. The chain is Inactive ribonuclease-like protein 10 (RNASE10) from Bos taurus (Bovine).